Reading from the N-terminus, the 692-residue chain is Elongation factor G (692 aa).

Positions 8–283 (NRIRNIGIAA…AVIDYLPAPT (276 aa)) constitute a tr-type G domain. GTP contacts are provided by residues 17–24 (AHIDAGKT), 81–85 (DTPGH), and 135–138 (NKMD).

This sequence belongs to the TRAFAC class translation factor GTPase superfamily. Classic translation factor GTPase family. EF-G/EF-2 subfamily.

It is found in the cytoplasm. In terms of biological role, catalyzes the GTP-dependent ribosomal translocation step during translation elongation. During this step, the ribosome changes from the pre-translocational (PRE) to the post-translocational (POST) state as the newly formed A-site-bound peptidyl-tRNA and P-site-bound deacylated tRNA move to the P and E sites, respectively. Catalyzes the coordinated movement of the two tRNA molecules, the mRNA and conformational changes in the ribosome. This chain is Elongation factor G (fusA), found in Helicobacter pylori (strain J99 / ATCC 700824) (Campylobacter pylori J99).